A 358-amino-acid chain; its full sequence is Probable translocation protein Y4yK (358 aa).

This sequence belongs to the FliN/MopA/SpaO family.

Functionally, could be involved in the secretion of an unknown factor. The sequence is that of Probable translocation protein Y4yK from Sinorhizobium fredii (strain NBRC 101917 / NGR234).